Reading from the N-terminus, the 399-residue chain is MTAAAPSKPLPRTPRVRQAYPLDYPLLLCALGLLAFGWVMVTSASMSIAEACCQNPFHYSIRHAIALGLALMLGLMAYSVPSHWWERHGVWLFLASALVLILVLIPGIGRTVNGATRWIPLGPLNVQPSEFVKLFAILYVAGYLVRHADKVVNQLSGFIRPLILIGAAALLILMQPDFGTTAVMLATVMGMLFLGGASLLPFIVLLAIVGAGLVTLVIFSPYRLERVVSFLNPWEDPFNSGYQLSQALIAFGRGEWFGVGLGNGIQKQYFLPEAHTDFLPSVIGEELGLAGMLVLIAAFVFLSWRAMSIGVRAEALKRPFESYVAQGIGLWIGLQSFVNLGVNVGILPTKGLTLPFMSYGSNSLMVGCMAVAILLRIDVMLRRVESEAKFKRGTPWSRA.

The Cytoplasmic segment spans residues 1 to 25 (MTAAAPSKPLPRTPRVRQAYPLDYP). A helical transmembrane segment spans residues 26 to 46 (LLLCALGLLAFGWVMVTSASM). Over 47 to 64 (SIAEACCQNPFHYSIRHA) the chain is Periplasmic. The chain crosses the membrane as a helical span at residues 65–85 (IALGLALMLGLMAYSVPSHWW). Over 86–88 (ERH) the chain is Cytoplasmic. A helical transmembrane segment spans residues 89-109 (GVWLFLASALVLILVLIPGIG). Over 110–117 (RTVNGATR) the chain is Periplasmic. The helical transmembrane segment at 118-138 (WIPLGPLNVQPSEFVKLFAIL) threads the bilayer. Residues 139–153 (YVAGYLVRHADKVVN) lie on the Cytoplasmic side of the membrane. The helical transmembrane segment at 154 to 174 (QLSGFIRPLILIGAAALLILM) threads the bilayer. Over 175–177 (QPD) the chain is Periplasmic. A run of 2 helical transmembrane segments spans residues 178–198 (FGTT…GGAS) and 199–219 (LLPF…LVIF). The Periplasmic segment spans residues 220-281 (SPYRLERVVS…PEAHTDFLPS (62 aa)). Residues 282-302 (VIGEELGLAGMLVLIAAFVFL) traverse the membrane as a helical segment. The Cytoplasmic segment spans residues 303–326 (SWRAMSIGVRAEALKRPFESYVAQ). A helical membrane pass occupies residues 327–347 (GIGLWIGLQSFVNLGVNVGIL). At 348-353 (PTKGLT) the chain is on the periplasmic side. The helical transmembrane segment at 354 to 374 (LPFMSYGSNSLMVGCMAVAIL) threads the bilayer. Topologically, residues 375 to 399 (LRIDVMLRRVESEAKFKRGTPWSRA) are cytoplasmic.

It belongs to the SEDS family. FtsW subfamily.

The protein localises to the cell inner membrane. The enzyme catalyses [GlcNAc-(1-&gt;4)-Mur2Ac(oyl-L-Ala-gamma-D-Glu-L-Lys-D-Ala-D-Ala)](n)-di-trans,octa-cis-undecaprenyl diphosphate + beta-D-GlcNAc-(1-&gt;4)-Mur2Ac(oyl-L-Ala-gamma-D-Glu-L-Lys-D-Ala-D-Ala)-di-trans,octa-cis-undecaprenyl diphosphate = [GlcNAc-(1-&gt;4)-Mur2Ac(oyl-L-Ala-gamma-D-Glu-L-Lys-D-Ala-D-Ala)](n+1)-di-trans,octa-cis-undecaprenyl diphosphate + di-trans,octa-cis-undecaprenyl diphosphate + H(+). It functions in the pathway cell wall biogenesis; peptidoglycan biosynthesis. In terms of biological role, peptidoglycan polymerase that is essential for cell division. This is Probable peptidoglycan glycosyltransferase FtsW from Allochromatium vinosum (strain ATCC 17899 / DSM 180 / NBRC 103801 / NCIMB 10441 / D) (Chromatium vinosum).